A 166-amino-acid polypeptide reads, in one-letter code: NADH-quinone oxidoreductase subunit A (166 aa).

Helical transmembrane passes span 16–36 (FAVFLIGAVGLCGLMLLGAYF), 68–88 (FYLVAMFFVIFDVEALYLYAW), and 98–118 (IGFIEAVIFILVLLAGLFYLV). The disordered stretch occupies residues 141 to 166 (RYASSHPQDISQELSVAGSQQANESR).

It belongs to the complex I subunit 3 family. In terms of assembly, NDH-1 is composed of 13 different subunits. Subunits NuoA, H, J, K, L, M, N constitute the membrane sector of the complex.

The protein localises to the cell inner membrane. It catalyses the reaction a quinone + NADH + 5 H(+)(in) = a quinol + NAD(+) + 4 H(+)(out). In terms of biological role, NDH-1 shuttles electrons from NADH, via FMN and iron-sulfur (Fe-S) centers, to quinones in the respiratory chain. The immediate electron acceptor for the enzyme in this species is believed to be ubiquinone. Couples the redox reaction to proton translocation (for every two electrons transferred, four hydrogen ions are translocated across the cytoplasmic membrane), and thus conserves the redox energy in a proton gradient. The chain is NADH-quinone oxidoreductase subunit A from Yersinia pseudotuberculosis serotype IB (strain PB1/+).